Here is a 251-residue protein sequence, read N- to C-terminus: Ribosome maturation factor RimP (251 aa).

Residues 198–251 (NLGLEPPAAPHAKISEKTTKNTKPKKKPAPTNTKKHRLAAERARRGEIEPDEGD) are disordered. Residues 217 to 234 (KNTKPKKKPAPTNTKKHR) are compositionally biased toward basic residues. Over residues 235–245 (LAAERARRGEI) the composition is skewed to basic and acidic residues.

Belongs to the RimP family.

The protein resides in the cytoplasm. In terms of biological role, required for maturation of 30S ribosomal subunits. The chain is Ribosome maturation factor RimP from Bradyrhizobium diazoefficiens (strain JCM 10833 / BCRC 13528 / IAM 13628 / NBRC 14792 / USDA 110).